A 203-amino-acid chain; its full sequence is Glycerol-3-phosphate acyltransferase (203 aa).

4 helical membrane-spanning segments follow: residues 4–24, 68–88, 104–124, and 125–145; these read LTFA…AVLI, IPVY…FIGI, GGKG…DMGS, and FMIV…LAAI.

It belongs to the PlsY family. Probably interacts with PlsX.

The protein localises to the cell inner membrane. It carries out the reaction an acyl phosphate + sn-glycerol 3-phosphate = a 1-acyl-sn-glycero-3-phosphate + phosphate. Its pathway is lipid metabolism; phospholipid metabolism. In terms of biological role, catalyzes the transfer of an acyl group from acyl-phosphate (acyl-PO(4)) to glycerol-3-phosphate (G3P) to form lysophosphatidic acid (LPA). This enzyme utilizes acyl-phosphate as fatty acyl donor, but not acyl-CoA or acyl-ACP. This Tolumonas auensis (strain DSM 9187 / NBRC 110442 / TA 4) protein is Glycerol-3-phosphate acyltransferase.